The sequence spans 396 residues: MANKKVTFREDVKSPAIRKLKQKLTPLKIKKGRGKIQKHIQKTLQKMKEEEESENQSPGTTVEETLTEENISTDKEETSKLENKPKKTRKTSGETIAQKKSRETVGVEVLKTSEGSSKMLGFHVSAAGGLEQAIYNARAEGCRSFAMFVRNQRTWNHKPMSEEVVENWWKAVRETNFPLDQIVPHGSYLMNAGSPEAEKLEKSRLAMLDECQRAEKLGITMYNFHPGSTVGKCEKEECMTTIAETIDFVVEKTENIILVLETMAGQGNSIGGTFEELKFIIDKVKVKSRVGVCIDTCHIFAGGYDIRTQKAYEEVMKNFGEVVGWNYLKAIHINDSKGDVGSKLDRHEHIGQGKIGKAAFELLMNDNRLDGIPMILETPEGKYPEEMMIMYNMDKR.

Residues 31–41 show a composition bias toward basic residues; the sequence is KGRGKIQKHIQ. A disordered region spans residues 31–100; sequence KGRGKIQKHI…TSGETIAQKK (70 aa). The span at 55–70 shows a compositional bias: polar residues; that stretch reads NQSPGTTVEETLTEEN. A compositionally biased stretch (basic and acidic residues) spans 72 to 85; that stretch reads STDKEETSKLENKP. Histidine 185, histidine 225, glutamate 261, aspartate 295, histidine 298, histidine 332, aspartate 345, histidine 347, and glutamate 377 together coordinate Zn(2+).

This sequence belongs to the AP endonuclease 2 family. Requires Zn(2+) as cofactor.

It localises to the nucleus. The polypeptide is Apurinic-apyrimidinic endonuclease (apn-1) (Caenorhabditis elegans).